The chain runs to 505 residues: Deoxyguanosinetriphosphate triphosphohydrolase (505 aa).

The HD domain maps to 66-273; it reads RLTHSMEVQQ…MEAADDISYC (208 aa).

The protein belongs to the dGTPase family. Type 1 subfamily. Homotetramer. Requires Mg(2+) as cofactor.

It catalyses the reaction dGTP + H2O = 2'-deoxyguanosine + triphosphate + H(+). Functionally, dGTPase preferentially hydrolyzes dGTP over the other canonical NTPs. This chain is Deoxyguanosinetriphosphate triphosphohydrolase, found in Shigella flexneri.